We begin with the raw amino-acid sequence, 514 residues long: Steroid 17-alpha-hydroxylase/17,20 lyase (514 aa).

C445 serves as a coordination point for heme.

It belongs to the cytochrome P450 family. Heme serves as cofactor.

The protein localises to the membrane. The catalysed reaction is a C21-steroid + reduced [NADPH--hemoprotein reductase] + O2 = a 17alpha-hydroxy-C21-steroid + oxidized [NADPH--hemoprotein reductase] + H2O + H(+). It catalyses the reaction 17alpha-hydroxyprogesterone + reduced [NADPH--hemoprotein reductase] + O2 = androst-4-ene-3,17-dione + acetate + oxidized [NADPH--hemoprotein reductase] + H2O + 2 H(+). It carries out the reaction 17alpha-hydroxypregnenolone + reduced [NADPH--hemoprotein reductase] + O2 = 3beta-hydroxyandrost-5-en-17-one + acetate + oxidized [NADPH--hemoprotein reductase] + H2O + 2 H(+). It participates in lipid metabolism; steroid biosynthesis. Conversion of pregnenolone and progesterone to their 17-alpha-hydroxylated products and subsequently to dehydroepiandrosterone (DHEA) and androstenedione. Catalyzes both the 17-alpha-hydroxylation and the 17,20-lyase reaction. This chain is Steroid 17-alpha-hydroxylase/17,20 lyase (cyp17a1), found in Ictalurus punctatus (Channel catfish).